The primary structure comprises 4830 residues: Siderophore peptide synthetase fer3 (4830 aa).

Positions 197–623 (LDQAEKFPDR…LGRMNAEQVK (427 aa)) are adenylation 1. The region spanning 751-833 (ANEDPVTQAL…DLIPLLSDTT (83 aa)) is the Carrier 1 domain. Position 788 is an O-(pantetheine 4'-phosphoryl)serine (serine 788). The segment at 879-1317 (QKIFPTTATQ…HSLMREPETT (439 aa)) is condensation 1. The adenylation 2 stretch occupies residues 1358 to 1781 (FENKAATEPE…IGRRDDLVKL (424 aa)). A Carrier 2 domain is found at 1929–2005 (GEDGDLQCQV…MLIRGLATKT (77 aa)). Serine 1966 is modified (O-(pantetheine 4'-phosphoryl)serine). Residues 2048–2503 (IPCSTLQEGM…LLDQVVSLLT (456 aa)) are condensation 2. An adenylation 3 region spans residues 2573–2977 (AGTPETACIN…LGRRDEQEKI (405 aa)). Positions 3122–3198 (RPLSSLEREI…DIAAELSDSK (77 aa)) constitute a Carrier 3 domain. The residue at position 3159 (serine 3159) is an O-(pantetheine 4'-phosphoryl)serine. The condensation 3 stretch occupies residues 3232–3621 (KVLPCLPSQE…RDRDELRISA (390 aa)). Residues 3685–3760 (TAAEEQIRDL…GLSKLLDQRQ (76 aa)) enclose the Carrier 4 domain. The residue at position 3720 (serine 3720) is an O-(pantetheine 4'-phosphoryl)serine. A condensation 4 region spans residues 3779–4199 (RYKATPLQAG…GVQIKAGASD (421 aa)). Residues 4264-4340 (SLSTAEQDIV…RLTVATETRS (77 aa)) enclose the Carrier 5 domain. O-(pantetheine 4'-phosphoryl)serine is present on serine 4301. The tract at residues 4381–4708 (VLPLLTGQQQ…DLVSRAEHQQ (328 aa)) is condensation 5.

It belongs to the NRP synthetase family.

Its pathway is siderophore biosynthesis. Its function is as follows. Nonribosomal peptide synthetase; part of the gene cluster that mediates the biosynthesis of siderophore ferrichrome A which is contributing to organismal virulence. The first step of ferrichrome A biosynthesis is performed by the HMG-CoA synthase hcs1 which catalyzes the generation of HMG-CoA and CoA using acetoacetyl-CoA and acetyl-CoA as substrates. The enoyl-CoA isomerase/hydratase fer4 then catalyzes the conversion of hcs1-produced HMG-CoA to methylglutaconyl-CoA. The acyltransferase fer5 then fuses the fer4-generated methylglutaconyl-CoA with sid1-generated hydroxyornithine to yield methylglutaconyl hydroxyornithine. Methylglutaconyl hydroxyornithine is then available for use by the NRPS fer3 to generate ferrichrome A. This Mycosarcoma maydis (Corn smut fungus) protein is Siderophore peptide synthetase fer3.